A 177-amino-acid chain; its full sequence is Glutamyl-tRNA(Gln) amidotransferase subunit F, mitochondrial (177 aa).

A mitochondrion-targeting transit peptide spans 1-16; the sequence is MIRINSRGLTVSTRRF. Positions 148–177 are disordered; that stretch reads PAKGETQGSFNVANMNPRNRPFATIRSKQG. Residues 153-164 are compositionally biased toward polar residues; sequence TQGSFNVANMNP.

It belongs to the GatF family. Subunit of the heterotrimeric GatFAB amidotransferase (AdT) complex, composed of A, B and F subunits.

The protein localises to the mitochondrion inner membrane. It carries out the reaction L-glutamyl-tRNA(Gln) + L-glutamine + ATP + H2O = L-glutaminyl-tRNA(Gln) + L-glutamate + ADP + phosphate + H(+). Its function is as follows. Allows the formation of correctly charged Gln-tRNA(Gln) through the transamidation of misacylated Glu-tRNA(Gln) in the mitochondria. The reaction takes place in the presence of glutamine and ATP through an activated gamma-phospho-Glu-tRNA(Gln). Required for proper protein synthesis within the mitochondrion. The chain is Glutamyl-tRNA(Gln) amidotransferase subunit F, mitochondrial from Scheffersomyces stipitis (strain ATCC 58785 / CBS 6054 / NBRC 10063 / NRRL Y-11545) (Yeast).